The primary structure comprises 277 residues: Orotidine 5'-phosphate decarboxylase (277 aa).

The Proton donor role is filled by Lys93.

It belongs to the OMP decarboxylase family. Type 2 subfamily.

It catalyses the reaction orotidine 5'-phosphate + H(+) = UMP + CO2. It functions in the pathway pyrimidine metabolism; UMP biosynthesis via de novo pathway; UMP from orotate: step 2/2. The protein is Orotidine 5'-phosphate decarboxylase of Haloarcula marismortui (strain ATCC 43049 / DSM 3752 / JCM 8966 / VKM B-1809) (Halobacterium marismortui).